The primary structure comprises 225 residues: Membrin-11 (225 aa).

Ala-2 is subject to N-acetylalanine. Residues 2–200 (ASGIVEGGGS…VLRLIERRNR (199 aa)) lie on the Cytoplasmic side of the membrane. A helical; Anchor for type IV membrane protein membrane pass occupies residues 201–221 (VDTWIKYAGMIATLVILYLFI). At 222 to 225 (RWTR) the chain is on the vesicular side.

The protein belongs to the GOSR2 family.

The protein localises to the golgi apparatus membrane. Its function is as follows. Involved in transport of proteins from the cis/medial-Golgi to the trans-Golgi network. The chain is Membrin-11 (MEMB11) from Arabidopsis thaliana (Mouse-ear cress).